Here is a 225-residue protein sequence, read N- to C-terminus: Ribonuclease 3 (225 aa).

The region spanning 7-129 (MPRLCRTLGY…IIGAVYIDSG (123 aa)) is the RNase III domain. E42 contributes to the Mg(2+) binding site. D46 is an active-site residue. The Mg(2+) site is built by D115 and E118. E118 is an active-site residue. The DRBM domain occupies 155 to 225 (DPKTLLQELL…AADALELMKR (71 aa)).

This sequence belongs to the ribonuclease III family. In terms of assembly, homodimer. Mg(2+) is required as a cofactor.

It localises to the cytoplasm. The enzyme catalyses Endonucleolytic cleavage to 5'-phosphomonoester.. Digests double-stranded RNA. Involved in the processing of primary rRNA transcript to yield the immediate precursors to the large and small rRNAs (23S and 16S). Processes some mRNAs, and tRNAs when they are encoded in the rRNA operon. Processes pre-crRNA and tracrRNA of type II CRISPR loci if present in the organism. This chain is Ribonuclease 3, found in Shewanella sediminis (strain HAW-EB3).